A 452-amino-acid polypeptide reads, in one-letter code: Methionine aminopeptidase 2 (452 aa).

The tract at residues 1 to 91 (MTGVTGTEDT…KNKKKKKKKI (91 aa)) is disordered. A compositionally biased stretch (basic and acidic residues) spans 8-38 (EDTKVIESKINELNIDKSKPEKTNKVNKSDD). The span at 39-62 (VDNDDVDNDDNDDEDNDDDDDEIT) shows a compositional bias: acidic residues. The span at 74 to 91 (KKKKKNKNKNKKKKKKKI) shows a compositional bias: basic residues. Residue H203 participates in substrate binding. A divalent metal cation-binding residues include D223, D234, and H305. Residue H313 participates in substrate binding. A divalent metal cation contacts are provided by E338 and E433.

The protein belongs to the peptidase M24A family. Methionine aminopeptidase eukaryotic type 2 subfamily. It depends on Co(2+) as a cofactor. The cofactor is Zn(2+). Mn(2+) is required as a cofactor. Fe(2+) serves as cofactor.

Its subcellular location is the cytoplasm. It catalyses the reaction Release of N-terminal amino acids, preferentially methionine, from peptides and arylamides.. Functionally, cotranslationally removes the N-terminal methionine from nascent proteins. The N-terminal methionine is often cleaved when the second residue in the primary sequence is small and uncharged (Met-Ala-, Cys, Gly, Pro, Ser, Thr, or Val). The protein is Methionine aminopeptidase 2 of Candida dubliniensis (strain CD36 / ATCC MYA-646 / CBS 7987 / NCPF 3949 / NRRL Y-17841) (Yeast).